The sequence spans 364 residues: DNA polymerase IV (364 aa).

One can recognise a UmuC domain in the interval 14–198 (IIHIDMDAFF…LPIEKFHGVG (185 aa)). Positions 18 and 116 each coordinate Mg(2+). E117 is an active-site residue.

Belongs to the DNA polymerase type-Y family. In terms of assembly, monomer. Requires Mg(2+) as cofactor.

It is found in the cytoplasm. The enzyme catalyses DNA(n) + a 2'-deoxyribonucleoside 5'-triphosphate = DNA(n+1) + diphosphate. Functionally, poorly processive, error-prone DNA polymerase involved in untargeted mutagenesis. Copies undamaged DNA at stalled replication forks, which arise in vivo from mismatched or misaligned primer ends. These misaligned primers can be extended by PolIV. Exhibits no 3'-5' exonuclease (proofreading) activity. May be involved in translesional synthesis, in conjunction with the beta clamp from PolIII. This chain is DNA polymerase IV, found in Streptococcus pyogenes serotype M5 (strain Manfredo).